The chain runs to 33 residues: Brevinin-2Ea (33 aa).

Cys27 and Cys33 are disulfide-bonded.

It belongs to the frog skin active peptide (FSAP) family. Brevinin subfamily. As to expression, expressed by the skin glands.

The protein resides in the secreted. Shows antibacterial activity against representative Gram-negative and Gram-positive bacterial species, and hemolytic activity. This is Brevinin-2Ea from Pelophylax lessonae (Pool frog).